The primary structure comprises 699 residues: Zinc finger protein 782 (699 aa).

Residues 8-79 (VSFQDVTVEF…EKEKGFLSRN (72 aa)) form the KRAB domain. The tract at residues 75-95 (FLSRNSPEDSQPDEISEKSPE) is disordered. A C2H2-type 1; degenerate zinc finger spans residues 279–307 (CFCRITHKTLTGGKSFSQKSHIREHHRVH). The segment at 316–332 (GKSFNRNSTLPVHQRTH) adopts a C2H2-type 2; degenerate zinc-finger fold. Residues 337–360 (YSDYHPCTETFSYQSTFSVHQKVH) form a C2H2-type 3; degenerate zinc finger. The C2H2-type 4; degenerate zinc finger occupies 366–388 (YEYNECGKSCSMNSHLIWPQKSH). C2H2-type zinc fingers lie at residues 394 to 416 (YECP…QRTH), 422 to 444 (YKCD…QRTH), 450 to 472 (FECH…QRTH), 478 to 500 (FECN…RRTH), 506 to 528 (YKCD…HRTH), 534 to 556 (YKCN…HRIH), 562 to 584 (YKCN…HRTH), 590 to 612 (YQCE…QRTH), 618 to 640 (YECN…QRTH), 646 to 668 (YNCN…QRTH), and 674 to 696 (YKCD…QKAH).

The protein belongs to the krueppel C2H2-type zinc-finger protein family.

It is found in the nucleus. Functionally, may be involved in transcriptional regulation. This is Zinc finger protein 782 (ZNF782) from Homo sapiens (Human).